Consider the following 172-residue polypeptide: 3-phenylpropionate/cinnamic acid dioxygenase subunit beta (172 aa).

The protein belongs to the bacterial ring-hydroxylating dioxygenase beta subunit family. This dioxygenase system consists of four proteins: the two subunits of the hydroxylase component (HcaE and HcaF), a ferredoxin (HcaC) and a ferredoxin reductase (HcaD).

It catalyses the reaction 3-phenylpropanoate + NADH + O2 + H(+) = 3-(cis-5,6-dihydroxycyclohexa-1,3-dien-1-yl)propanoate + NAD(+). The enzyme catalyses (E)-cinnamate + NADH + O2 + H(+) = (2E)-3-(cis-5,6-dihydroxycyclohexa-1,3-dien-1-yl)prop-2-enoate + NAD(+). It functions in the pathway aromatic compound metabolism; 3-phenylpropanoate degradation. Functionally, part of the multicomponent 3-phenylpropionate dioxygenase. Converts 3-phenylpropionic acid (PP) and cinnamic acid (CI) into 3-phenylpropionate-dihydrodiol (PP-dihydrodiol) and cinnamic acid-dihydrodiol (CI-dihydrodiol), respectively. The chain is 3-phenylpropionate/cinnamic acid dioxygenase subunit beta from Shigella boydii serotype 4 (strain Sb227).